The sequence spans 492 residues: Glutamyl-tRNA(Gln) amidotransferase subunit A (492 aa).

Catalysis depends on charge relay system residues K78 and S158. The active-site Acyl-ester intermediate is S182.

It belongs to the amidase family. GatA subfamily. As to quaternary structure, heterotrimer of A, B and C subunits.

The enzyme catalyses L-glutamyl-tRNA(Gln) + L-glutamine + ATP + H2O = L-glutaminyl-tRNA(Gln) + L-glutamate + ADP + phosphate + H(+). Functionally, allows the formation of correctly charged Gln-tRNA(Gln) through the transamidation of misacylated Glu-tRNA(Gln) in organisms which lack glutaminyl-tRNA synthetase. The reaction takes place in the presence of glutamine and ATP through an activated gamma-phospho-Glu-tRNA(Gln). The sequence is that of Glutamyl-tRNA(Gln) amidotransferase subunit A from Rhodopseudomonas palustris (strain BisA53).